The primary structure comprises 317 residues: 17-beta-hydroxysteroid dehydrogenase type 6 (317 aa).

An N-terminal signal peptide occupies residues 1-17; the sequence is MWFYLVTLVGLYHLLRW. 33 to 57 is an NAD(+) binding site; the sequence is FITGCDSGFGNLLARQLDRRGMRVL. 2 N-linked (GlcNAc...) asparagine glycosylation sites follow: N71 and N161. S164 is a substrate binding site. Y176 functions as the Proton acceptor in the catalytic mechanism.

This sequence belongs to the short-chain dehydrogenases/reductases (SDR) family. As to expression, detected in liver.

Its subcellular location is the microsome membrane. The protein resides in the early endosome membrane. The enzyme catalyses all-trans-retinol--[retinol-binding protein] + NAD(+) = all-trans-retinal--[retinol-binding protein] + NADH + H(+). It catalyses the reaction all-trans-retinol + NAD(+) = all-trans-retinal + NADH + H(+). The catalysed reaction is androsterone + NAD(+) = 5alpha-androstan-3,17-dione + NADH + H(+). It carries out the reaction testosterone + NAD(+) = androst-4-ene-3,17-dione + NADH + H(+). The enzyme catalyses 5alpha-androstane-3alpha,17beta-diol + NAD(+) = 17beta-hydroxy-5alpha-androstan-3-one + NADH + H(+). It catalyses the reaction 17beta-estradiol + NAD(+) = estrone + NADH + H(+). The catalysed reaction is 17beta-estradiol + NADP(+) = estrone + NADPH + H(+). It carries out the reaction 3alpha-hydroxy-5alpha-pregnan-20-one + NAD(+) = 5alpha-pregnane-3,20-dione + NADH + H(+). The enzyme catalyses 5alpha-androstane-3beta,17beta-diol + NAD(+) = 17beta-hydroxy-5alpha-androstan-3-one + NADH + H(+). It catalyses the reaction 3beta-hydroxy-5alpha-androstan-17-one + NAD(+) = 5alpha-androstan-3,17-dione + NADH + H(+). Inhibited by carbenoxolone and phenyl arsenoxide. NAD-dependent oxidoreductase with broad substrate specificity that shows both oxidative and reductive activity (in vitro). Has 17-beta-hydroxysteroid dehydrogenase activity towards various steroids (in vitro). Converts 5-alpha-androstan-3-alpha,17-beta-diol to androsterone and estradiol to estrone (in vitro). Has 3-alpha-hydroxysteroid dehydrogenase activity towards androsterone (in vitro). Has retinol dehydrogenase activity towards all-trans-retinol (in vitro). The chain is 17-beta-hydroxysteroid dehydrogenase type 6 (Hsd17b6) from Mus musculus (Mouse).